The following is a 188-amino-acid chain: Elongation factor P (188 aa).

It belongs to the elongation factor P family.

It is found in the cytoplasm. It functions in the pathway protein biosynthesis; polypeptide chain elongation. Involved in peptide bond synthesis. Stimulates efficient translation and peptide-bond synthesis on native or reconstituted 70S ribosomes in vitro. Probably functions indirectly by altering the affinity of the ribosome for aminoacyl-tRNA, thus increasing their reactivity as acceptors for peptidyl transferase. The sequence is that of Elongation factor P from Chloroherpeton thalassium (strain ATCC 35110 / GB-78).